The sequence spans 336 residues: Inositol 2-dehydrogenase (336 aa).

This sequence belongs to the Gfo/Idh/MocA family. In terms of assembly, homotetramer.

The enzyme catalyses myo-inositol + NAD(+) = scyllo-inosose + NADH + H(+). Functionally, involved in the oxidation of myo-inositol (MI) to 2-keto-myo-inositol (2KMI or 2-inosose). This is Inositol 2-dehydrogenase from Paracoccus denitrificans (strain Pd 1222).